A 625-amino-acid polypeptide reads, in one-letter code: Sorting nexin-41 (625 aa).

Residues 1-90 form a disordered region; it reads MDYNIFEAVH…STSSHAVVEA (90 aa). Over residues 54 to 86 the composition is skewed to low complexity; that stretch reads SPPSSSSLPSSPAHSSSAGSSRASTSSSTSSHA. The PX domain maps to 98-235; that stretch reads VSLSMSTTAT…QKFLNPEFNW (138 aa). A 1,2-diacyl-sn-glycero-3-phospho-(1D-myo-inositol-3-phosphate) is bound by residues R153, S155, K179, and R202. Coiled-coil stretches lie at residues 437–469 and 539–563; these read QFKI…NESL and QLTE…KDCL.

The protein belongs to the sorting nexin family. In terms of assembly, binds to SNX4.

It localises to the prevacuolar compartment. The protein resides in the endosome. It is found in the endosome membrane. Involved in proper sorting of the v-SNARE protein SNC1. In Saccharomyces cerevisiae (strain ATCC 204508 / S288c) (Baker's yeast), this protein is Sorting nexin-41 (SNX41).